We begin with the raw amino-acid sequence, 3218 residues long: Serine/threonine-protein kinase Smg1 (3218 aa).

The disordered stretch occupies residues 32-78 (LNNNGNHGDSSNEGGGGNGSGRGGATGSGNIAGLGGSESMWSPGGGK). The segment covering 33–43 (NNNGNHGDSSN) has biased composition (low complexity). A compositionally biased stretch (gly residues) spans 44-67 (EGGGGNGSGRGGATGSGNIAGLGG). Phosphoserine is present on Ser-70. Positions 1289 to 1692 (DAAAAAREEG…IFPAVVGANR (404 aa)) constitute an FAT domain. One copy of the HEAT repeat lies at 1643 to 1678 (APWKVIIPQLFSRLNHHEPYVRKSVCDLLCRLAKSR). The PI3K/PI4K catalytic domain maps to 1897 to 2232 (VESSVCVLPT…LGVGDLKYHK (336 aa)). The segment at 1903–1909 (VLPTKTK) is G-loop. The catalytic loop stretch occupies residues 2101-2109 (GLGDRHLDN). The segment at 2121–2145 (HIDYNVCFEKGRTLRIPEKVPFRLT) is activation loop. An FATC domain is found at 3186 to 3218 (QRSTVAEQVDYVIREACNPENLAVLYEGWTPWV).

The protein belongs to the PI3/PI4-kinase family. Component of a post-splicing multiprotein NMD complex. Mn(2+) serves as cofactor.

The protein localises to the cytoplasm. The enzyme catalyses L-seryl-[protein] + ATP = O-phospho-L-seryl-[protein] + ADP + H(+). It carries out the reaction L-threonyl-[protein] + ATP = O-phospho-L-threonyl-[protein] + ADP + H(+). Functionally, serine/threonine protein kinase involved in mRNA surveillance. Recognizes the substrate consensus sequence [ST]-Q. Involved in nonsense-mediated decay (NMD) of mRNAs containing premature stop codons, probably by phosphorylating Upf1. This is Serine/threonine-protein kinase Smg1 (nonC) from Drosophila melanogaster (Fruit fly).